Here is a 269-residue protein sequence, read N- to C-terminus: 5'-nucleotidase SurE (269 aa).

Residues aspartate 11, aspartate 12, serine 42, and asparagine 90 each coordinate a divalent metal cation.

The protein belongs to the SurE nucleotidase family. Requires a divalent metal cation as cofactor.

It is found in the cytoplasm. It carries out the reaction a ribonucleoside 5'-phosphate + H2O = a ribonucleoside + phosphate. Nucleotidase that shows phosphatase activity on nucleoside 5'-monophosphates. The sequence is that of 5'-nucleotidase SurE from Haloarcula marismortui (strain ATCC 43049 / DSM 3752 / JCM 8966 / VKM B-1809) (Halobacterium marismortui).